Consider the following 210-residue polypeptide: Transmembrane protein 61 (210 aa).

A run of 2 helical transmembrane segments spans residues 18–38 and 69–89; these read YCMT…FAWW and VSFV…LWSV. The segment at 140–172 is disordered; sequence VAEGPPTPPAYPTEEALEPSGSRDALLSTQPAW.

The protein resides in the membrane. This Homo sapiens (Human) protein is Transmembrane protein 61 (TMEM61).